The following is a 351-amino-acid chain: MKKSTLALVVMGITASASVQAAEVYNKNGNKLDLYGKVKAMHYMTDYDSKDGDQSYIRLGFKGETQINDELTGYGRWEAEFAGNKAESDSNQQKTRLAFAGSKLKNLGSFDYGRNLGALYDVEAWTDMFPEFGGDSSAQTDNFMTKRASGLATYRNTDFFGVVDGLDLTLQYQGKNQDRDVKKQNGDGFGTSVTYDFGGSDFAVSGAYTNSDRTNQQNLQTRGTGDKAEAWATGLKYDANDIYIATFYSETRNMTPISGGFANKTQNFEAVVQYQFDFGLRPSLGYVLSKGKDIEGVGNEDLVNYIDVGATYYFNKNMSAFVDYKINQLDSDNKLGINNDDIVAVGMVYQF.

Residues Met1 to Ala21 form the signal peptide.

It belongs to the Gram-negative porin family. Homotrimer.

The protein localises to the cell outer membrane. Its function is as follows. Uptake of inorganic phosphate, phosphorylated compounds, and some other negatively charged solutes. The protein is Outer membrane porin PhoE (phoE) of Citrobacter freundii.